Here is a 725-residue protein sequence, read N- to C-terminus: Putative coiled-coil domain-containing protein 144B (725 aa).

The span at 1–11 (MASWGGEKRGG) shows a compositional bias: basic and acidic residues. 5 disordered regions span residues 1-25 (MASW…ATRK), 87-188 (AARS…NLTE), 213-260 (LPEN…DCDR), 453-485 (NMNQ…DSDR), and 528-586 (EEEM…KVKN). Composition is skewed to polar residues over residues 129–150 (PESL…LSDE) and 165–178 (PSVS…QSAT). Positions 215–244 (ENKESKEAEQDLELTSEEEQERLKGCENKQ) form a coiled coil. Positions 224–234 (QDLELTSEEEQ) are enriched in acidic residues. Over residues 453 to 467 (NMNQNSDSGSTNNYK) the composition is skewed to polar residues. Positions 490–546 (YLHEELQQDMQKFKNEVNTLEEEFLALKKENVQLHKEVEEEMEKHRSNSTELSGTLT) form a coiled coil. Residues 528 to 537 (EEEMEKHRSN) are compositionally biased toward basic and acidic residues. Residues 543-552 (GTLTDGTTVG) are compositionally biased toward low complexity. Positions 563-583 (PRKENEEHDRPADKTANEKNK) are enriched in basic and acidic residues. The stretch at 648–713 (LLKLKNNHCD…ALKQENGRKE (66 aa)) forms a coiled coil.

It belongs to the CCDC144 family.

This chain is Putative coiled-coil domain-containing protein 144B, found in Homo sapiens (Human).